The sequence spans 1348 residues: MELGPLRVLTVLLCLAPVFAGLFISMDQPTLSIQKSVLTITTNDTLNITCSGQRAVYWSWPNNQSSVEKRLAVTGCSEGPFCKTLTLLRVIGNDTGDYRCLYGDSQAATTIYVYVQDYRSPFVTSVGDQLGIVYITKNKTVVVPCLGTVSNLNVSLHAKYPEKVFVPDGKSISWDNKKGFTIPSHLINYAGMVFCEAKIDNESYQSVIYIVAVVGYRIYDLTMNPHYQVELAVGEKLVLNCTVRTELNVGIDFRWDYPSIKERRATIRDLKTTAGEIKTFVSTLTIESVNLSDKGRYTCAASSGRMNMKNSSYFIIHESPFIHLEKMENVVEMKLGDTVSIPVKFKGYPPPEAKWYKNGKVINANHTVKLGYALVITEATEKDAGNYTVVLTNPTNKMQKRHTFTLLVNVPPQIGENALMAPVDSYKYGSTQALTCTIYAVPPPAAVLWYWQLEEECTFSPQKVRLGANPYACRKWKVISERKGGNQVEIKQRVVTIAGKTKTVSTLVIQAANVSALYRCMATNRAGSSERVISFHVTRGLEINLQPRSQLTEKDNTSLQCTADKFTFEKLSWYKLSTHVSQTPFGGLPMPVCKNLDALQKLNATVSNVNGENVTLELILRNISLQDGGDYVCIAQDKKAKTQHCLVKHLTVQEPLHPRLVGNLENQTTNIGETIEVLCTVNGVPPPNITWFKNSETLFEDSGIVLKDGNKTLTIRRVRKEDGGLYTCLACNILGCKKAEAFFSVQGAEEKTNLELIILVGTAVIAMFFWLLLVIILRTVKRANGGDMKTGYLSIIMDPDEVPIDEHCERLPYDASKWEFPRDRLKLGKPLGRGAFGQVIEADAFGIDKTATCRTVAVKMLKEGATHSEHRALMSELKILIHIGHHLNVVNLLGACTKPGGPLMVIVEYCKFGNLSAYLRSKRSEFIPYKMKSARFRQGKENYTGDISTDLKQRLDSITSSQSSTSSGFVEERSLSDVEEEDAGSEDLCKNPLTMEDLICYSFQVARGMEFLASRKCIHRDLAARNILLSDNNVVKICDFGLARDIYKDPDYVRKGDARLPLKWMAPETIFDRVYTIQSDVWSFGVLLWEIFSLGASPYPGVKIDEEFCRRLKEGTRMRAPDYTTPEMYQTMLDCWHGDPKQRPTFSELVEHLGNLLQANVRQDGKDYVVLPLSVSLNMEEDSGLSLPTSPASCKEEEEVCDPKFHYDNTAGISQYRQGSKRKSRPVSVKTFEDIPLVTTVKVVQEENQTDSGMVLASEELKTLEEQDKQVKIPFSTLAPSKSNESVMSEASNQTSGYQSGYHSDDMDNMVCSSEDTELLCAQEASPTLPRCAWPGIYSPAPVASLPL.

Residues 1–20 (MELGPLRVLTVLLCLAPVFA) form the signal peptide. Over 21–756 (GLFISMDQPT…GAEEKTNLEL (736 aa)) the chain is Extracellular. Asn-43, Asn-47, Asn-63, Asn-93, Asn-138, Asn-153, Asn-201, Asn-240, Asn-290, Asn-310, Asn-365, Asn-386, Asn-513, Asn-556, Asn-603, Asn-613, Asn-622, Asn-666, Asn-688, and Asn-710 each carry an N-linked (GlcNAc...) asparagine glycan. 7 Ig-like C2-type domains span residues 43-106 (NDTL…GDSQ), 138-202 (NKTV…IDNE), 220-312 (DLTM…KNSS), 320-405 (PFIH…HTFT), 412-534 (PQIG…RVIS), 540-651 (GLEI…KHLT), and 658-744 (PRLV…AFFS). Cys-50 and Cys-100 are joined by a disulfide. A disulfide bridge connects residues Cys-145 and Cys-195. Cysteines 241 and 299 form a disulfide. Cys-436 and Cys-520 are disulfide-bonded. The cysteines at positions 561 and 633 are disulfide-linked. Residues Cys-679 and Cys-728 are joined by a disulfide bond. The helical transmembrane segment at 757 to 777 (IILVGTAVIAMFFWLLLVIIL) threads the bilayer. The Cytoplasmic segment spans residues 778–1348 (RTVKRANGGD…SPAPVASLPL (571 aa)). Residues 825-1155 (LKLGKPLGRG…FSELVEHLGN (331 aa)) form the Protein kinase domain. ATP contacts are provided by residues 831–839 (LGRGAFGQV) and Lys-859. A compositionally biased stretch (low complexity) spans 958-967 (ITSSQSSTSS). Positions 958–983 (ITSSQSSTSSGFVEERSLSDVEEEDA) are disordered. The active-site Proton acceptor is the Asp-1021. Residues Tyr-1047, Tyr-1052, Tyr-1168, and Tyr-1207 each carry the phosphotyrosine; by autocatalysis modification. Residues 1280–1302 (PSKSNESVMSEASNQTSGYQSGY) form a disordered region.

Belongs to the protein kinase superfamily. Tyr protein kinase family. CSF-1/PDGF receptor subfamily. Autophosphorylated on tyrosine residues upon ligand binding. Autophosphorylation occurs in trans, i.e. one subunit of the dimeric receptor phosphorylates tyrosine residues on the other subunit. In all endothelial tissues during onset of vascularization. In later development, present in lung, heart, intestine and skin.

It is found in the cell membrane. Its subcellular location is the cytoplasmic vesicle. The protein localises to the early endosome. The protein resides in the cell junction. It localises to the endoplasmic reticulum. The enzyme catalyses L-tyrosyl-[protein] + ATP = O-phospho-L-tyrosyl-[protein] + ADP + H(+). Present in an inactive conformation in the absence of bound ligand. Binding of VEGFA, VEGFC or VEGFD leads to dimerization and activation by autophosphorylation on tyrosine residues. Tyrosine-protein kinase that acts as a cell-surface receptor for VEGFA, VEGFC and/or VEGFD and plays an essential role in the regulation of angiogenesis and vascular development. Promotes proliferation, survival, migration and differentiation of endothelial cells. Promotes reorganization of the actin cytoskeleton. Binding of vascular growth factors leads to the activation of several signaling cascades. Activation of PLCG1 leads to the production of the cellular signaling molecules diacylglycerol and inositol 1,4,5-trisphosphate and the activation of protein kinase C. Mediates activation of MAPK1/ERK2, MAPK3/ERK1 and the MAP kinase signaling pathway, as well as of the AKT1 signaling pathway. Mediates phosphorylation of PIK3R1, the regulatory subunit of phosphatidylinositol 3-kinase, reorganization of the actin cytoskeleton and activation of PTK2/FAK1. Required for VEGFA-mediated induction of NOS2 and NOS3, leading to the production of the signaling molecule nitric oxide (NO) by endothelial cells. The polypeptide is Vascular endothelial growth factor receptor 2 (Coturnix japonica (Japanese quail)).